Reading from the N-terminus, the 519-residue chain is Golgi-associated kinase 1B (519 aa).

Topologically, residues 1–37 (MTCPDKPGQLINWFICSLCVPRVRKLWSSRRPRTRRN) are cytoplasmic. A helical; Signal-anchor for type II membrane protein transmembrane segment spans residues 38-55 (LLLGTACAIYLGFLVSQV). Over 56–519 (GRASLQHGQA…HGVKVLPMNE (464 aa)) the chain is Extracellular. The segment at 62-103 (HGQAAEKGPHRSRDTAEPSFPEIPLDGTLAPPESQGNGSTLQ) is disordered. Residues 68–77 (KGPHRSRDTA) show a composition bias toward basic and acidic residues. Residue Asn289 is glycosylated (N-linked (GlcNAc...) asparagine).

Belongs to the GASK family.

The protein localises to the golgi apparatus membrane. In Homo sapiens (Human), this protein is Golgi-associated kinase 1B.